A 122-amino-acid polypeptide reads, in one-letter code: Large ribosomal subunit protein uL14 (122 aa).

It belongs to the universal ribosomal protein uL14 family. In terms of assembly, part of the 50S ribosomal subunit. Forms a cluster with proteins L3 and L19. In the 70S ribosome, L14 and L19 interact and together make contacts with the 16S rRNA in bridges B5 and B8.

Binds to 23S rRNA. Forms part of two intersubunit bridges in the 70S ribosome. The polypeptide is Large ribosomal subunit protein uL14 (Staphylococcus aureus (strain MW2)).